The following is a 357-amino-acid chain: tRNA N6-adenosine threonylcarbamoyltransferase (357 aa).

2 residues coordinate Fe cation: H116 and H120. Substrate is bound by residues 139-143 (LVSGG), D172, G185, and N284. A Fe cation-binding site is contributed by D312.

Belongs to the KAE1 / TsaD family. Requires Fe(2+) as cofactor.

The protein localises to the cytoplasm. It catalyses the reaction L-threonylcarbamoyladenylate + adenosine(37) in tRNA = N(6)-L-threonylcarbamoyladenosine(37) in tRNA + AMP + H(+). Its function is as follows. Required for the formation of a threonylcarbamoyl group on adenosine at position 37 (t(6)A37) in tRNAs that read codons beginning with adenine. Is involved in the transfer of the threonylcarbamoyl moiety of threonylcarbamoyl-AMP (TC-AMP) to the N6 group of A37, together with TsaE and TsaB. TsaD likely plays a direct catalytic role in this reaction. In Synechococcus sp. (strain CC9902), this protein is tRNA N6-adenosine threonylcarbamoyltransferase.